A 1141-amino-acid chain; its full sequence is DNA polymerase 120R (1141 aa).

It belongs to the DNA polymerase type-B family.

The catalysed reaction is DNA(n) + a 2'-deoxyribonucleoside 5'-triphosphate = DNA(n+1) + diphosphate. In terms of biological role, DNA-directed DNA polymerase involved in viral DNA replication. The chain is DNA polymerase 120R from Invertebrate iridescent virus 3 (IIV-3).